The primary structure comprises 2242 residues: Large tegument protein deneddylase (2242 aa).

Residues Met1–Ser238 are deubiquitination activity. One can recognise a Peptidase C76 domain in the interval Thr4–Asp226. Residues Cys24, Asp160, and His162 contribute to the active site. The tract at residues Ala239–Ser318 is disordered. Low complexity predominate over residues Asp240–Pro250. The span at Ser251 to Val268 shows a compositional bias: pro residues. Residues Pro304–Ser318 show a composition bias toward low complexity. An interaction with inner tegument protein region spans residues Ser328–Pro332. The segment covering Ser1173–Glu1190 has biased composition (polar residues). The disordered stretch occupies residues Ser1173–Pro1229. The segment covering Thr1191–Arg1200 has biased composition (basic and acidic residues).

It belongs to the herpesviridae large tegument protein family. Interacts with host CUL1 and CUL4A; these interactions inhibit the E3 ligase activity of cullins. Interacts with inner tegument protein. Interacts with capsid vertex specific component CVC2. Interacts with the major capsid protein/MCP.

Its subcellular location is the virion tegument. The protein resides in the host cytoplasm. It localises to the host nucleus. It carries out the reaction Thiol-dependent hydrolysis of ester, thioester, amide, peptide and isopeptide bonds formed by the C-terminal Gly of ubiquitin (a 76-residue protein attached to proteins as an intracellular targeting signal).. Large tegument protein that plays multiple roles in the viral cycle. During viral entry, remains associated with the capsid while most of the tegument is detached and participates in the capsid transport toward the host nucleus. Plays a role in the routing of the capsid at the nuclear pore complex and subsequent uncoating. Within the host nucleus, acts as a deneddylase and promotes the degradation of nuclear CRLs (cullin-RING ubiquitin ligases) and thereby stabilizes nuclear CRL substrates, while cytoplasmic CRLs remain unaffected. These modifications prevent host cell cycle S-phase progression and create a favorable environment allowing efficient viral genome replication. Participates later in the secondary envelopment of capsids. Indeed, plays a linker role for the association of the outer viral tegument to the capsids together with the inner tegument protein. The protein is Large tegument protein deneddylase of Homo sapiens (Human).